A 282-amino-acid chain; its full sequence is Phosphatidylserine decarboxylase proenzyme (282 aa).

Residues Asp88, His144, and Ser247 each act as charge relay system; for autoendoproteolytic cleavage activity in the active site. Catalysis depends on Ser247, which acts as the Schiff-base intermediate with substrate; via pyruvic acid; for decarboxylase activity. Ser247 bears the Pyruvic acid (Ser); by autocatalysis mark.

Belongs to the phosphatidylserine decarboxylase family. PSD-B subfamily. Prokaryotic type I sub-subfamily. In terms of assembly, heterodimer of a large membrane-associated beta subunit and a small pyruvoyl-containing alpha subunit. Pyruvate is required as a cofactor. Post-translationally, is synthesized initially as an inactive proenzyme. Formation of the active enzyme involves a self-maturation process in which the active site pyruvoyl group is generated from an internal serine residue via an autocatalytic post-translational modification. Two non-identical subunits are generated from the proenzyme in this reaction, and the pyruvate is formed at the N-terminus of the alpha chain, which is derived from the carboxyl end of the proenzyme. The autoendoproteolytic cleavage occurs by a canonical serine protease mechanism, in which the side chain hydroxyl group of the serine supplies its oxygen atom to form the C-terminus of the beta chain, while the remainder of the serine residue undergoes an oxidative deamination to produce ammonia and the pyruvoyl prosthetic group on the alpha chain. During this reaction, the Ser that is part of the protease active site of the proenzyme becomes the pyruvoyl prosthetic group, which constitutes an essential element of the active site of the mature decarboxylase.

The protein localises to the cell membrane. The enzyme catalyses a 1,2-diacyl-sn-glycero-3-phospho-L-serine + H(+) = a 1,2-diacyl-sn-glycero-3-phosphoethanolamine + CO2. It functions in the pathway phospholipid metabolism; phosphatidylethanolamine biosynthesis; phosphatidylethanolamine from CDP-diacylglycerol: step 2/2. Catalyzes the formation of phosphatidylethanolamine (PtdEtn) from phosphatidylserine (PtdSer). The protein is Phosphatidylserine decarboxylase proenzyme of Xanthomonas oryzae pv. oryzae (strain MAFF 311018).